The chain runs to 234 residues: UPF0173 metal-dependent hydrolase RHE_CH01853 (234 aa).

This sequence belongs to the UPF0173 family.

This chain is UPF0173 metal-dependent hydrolase RHE_CH01853, found in Rhizobium etli (strain ATCC 51251 / DSM 11541 / JCM 21823 / NBRC 15573 / CFN 42).